Reading from the N-terminus, the 73-residue chain is Conotoxin Im14.3 (73 aa).

A signal peptide spans 1-17; that stretch reads MGVFRCCLAAALVVVCL. Residues 18 to 35 constitute a propeptide that is removed on maturation; the sequence is SRMGGTEPLESNHEDERR. The tract at residues 22–42 is disordered; that stretch reads GTEPLESNHEDERRADDTSGD. Over residues 27 to 38 the composition is skewed to basic and acidic residues; that stretch reads ESNHEDERRADD. The 30-residue stretch at 44-73 folds into the ShKT domain; it reads CVDTNEDCVNWASTGQCEANPSYMRENCRK.

Contain 2 disulfide bonds. In terms of tissue distribution, expressed by the venom duct.

Its subcellular location is the secreted. Functionally, probable neurotoxin. The chain is Conotoxin Im14.3 from Conus imperialis (Imperial cone).